The following is a 316-amino-acid chain: Small ribosomal subunit biogenesis GTPase RsgA (316 aa).

One can recognise a CP-type G domain in the interval 83–248; the sequence is DQYKSKLFAA…LIDSPGFQEF (166 aa). GTP contacts are provided by residues 131–134 and 185–193; these read NKTD and GQSGMGKST. The Zn(2+) site is built by Cys-272, Cys-277, His-279, and Cys-285.

It belongs to the TRAFAC class YlqF/YawG GTPase family. RsgA subfamily. In terms of assembly, monomer. Associates with 30S ribosomal subunit, binds 16S rRNA. Zn(2+) is required as a cofactor.

It is found in the cytoplasm. One of several proteins that assist in the late maturation steps of the functional core of the 30S ribosomal subunit. Helps release RbfA from mature subunits. May play a role in the assembly of ribosomal proteins into the subunit. Circularly permuted GTPase that catalyzes slow GTP hydrolysis, GTPase activity is stimulated by the 30S ribosomal subunit. The protein is Small ribosomal subunit biogenesis GTPase RsgA of Paraburkholderia phytofirmans (strain DSM 17436 / LMG 22146 / PsJN) (Burkholderia phytofirmans).